We begin with the raw amino-acid sequence, 448 residues long: Alginate biosynthesis transcriptional regulatory protein AlgB (448 aa).

One can recognise a Response regulatory domain in the interval 10–124 (RILLVDDESA…QLRLATAKQL (115 aa)). A 4-aspartylphosphate modification is found at aspartate 59. Positions 147-376 (LDSHSPAMMA…LRNVVERASI (230 aa)) constitute a Sigma-54 factor interaction domain. ATP is bound by residues 175-182 (GESGTGKG) and 238-247 (ADGGTLFLDE). The segment at residues 425–444 (LDQAAKTLGIDASTLYRKRK) is a DNA-binding region (H-T-H motif).

Its pathway is glycan biosynthesis; alginate biosynthesis [regulation]. Positive regulator of the alginate biosynthetic gene algD. In Pseudomonas putida (strain ATCC 47054 / DSM 6125 / CFBP 8728 / NCIMB 11950 / KT2440), this protein is Alginate biosynthesis transcriptional regulatory protein AlgB (algB).